Consider the following 417-residue polypeptide: Odorant receptor 65a (417 aa).

The Cytoplasmic portion of the chain corresponds to Met-1–Arg-62. Residues Ile-63–Tyr-83 traverse the membrane as a helical segment. Topologically, residues Gly-84–Asp-98 are extracellular. The chain crosses the membrane as a helical span at residues Leu-99 to Ala-119. The Cytoplasmic portion of the chain corresponds to Gly-120–His-152. The chain crosses the membrane as a helical span at residues Phe-153–Ile-173. Residues Lys-174–Tyr-206 are Extracellular-facing. Residues Ile-207–Val-227 traverse the membrane as a helical segment. Topologically, residues Glu-228–Gly-290 are cytoplasmic. A helical transmembrane segment spans residues Ala-291–Leu-311. Residues Ala-312–Asn-316 lie on the Extracellular side of the membrane. Residues Pro-317–Trp-337 form a helical membrane-spanning segment. Residues Ser-338–Phe-393 are Cytoplasmic-facing. A helical membrane pass occupies residues Asn-394–Asn-414. Topologically, residues Thr-415 to Glu-417 are extracellular.

It belongs to the insect chemoreceptor superfamily. Heteromeric odorant receptor channel (TC 1.A.69) family. Or49a subfamily. Interacts with Orco. Complexes exist early in the endomembrane system in olfactory sensory neurons (OSNs), coupling these complexes to the conserved ciliary trafficking pathway. As to expression, expressed in olfactory sensory neurons in the antenna.

Its subcellular location is the cell membrane. Its function is as follows. Odorant receptor which mediates acceptance or avoidance behavior, depending on its substrates. The odorant receptor repertoire encodes a large collection of odor stimuli that vary widely in identity, intensity, and duration. May form a complex with Orco to form odorant-sensing units, providing sensitive and prolonged odorant signaling and calcium permeability. Involved in olfactory communication for modulating aggression through the sensing of the male-specific pheromone 11-cis-vaccenyl acetate (cVA). Although acute exposure to cVA elicites aggression through Or67d olfactory receptor neurons (ORNs), chronic cVA exposure reduces aggression through Or65a ORNs. Moreover, cVA leads to generalized learning with mated females. It is a major component of the male cuticular hydrocarbon profile, but it is not found on virgin females. During copulation, cVA is transferred to the female in ejaculate along with sperm and peptides that decrease her sexual receptivity. This chain is Odorant receptor 65a (Or65a), found in Drosophila melanogaster (Fruit fly).